A 277-amino-acid chain; its full sequence is Large ribosomal subunit protein uL2 (277 aa).

The disordered stretch occupies residues 223-277 (VVMNPIDHPHGGGEGRTSGGRHPVTPWGKPTKGKKTRSNKSTNKFILISRHKRKK).

The protein belongs to the universal ribosomal protein uL2 family. Part of the 50S ribosomal subunit. Forms a bridge to the 30S subunit in the 70S ribosome.

In terms of biological role, one of the primary rRNA binding proteins. Required for association of the 30S and 50S subunits to form the 70S ribosome, for tRNA binding and peptide bond formation. It has been suggested to have peptidyltransferase activity; this is somewhat controversial. Makes several contacts with the 16S rRNA in the 70S ribosome. The polypeptide is Large ribosomal subunit protein uL2 (Nitrobacter hamburgensis (strain DSM 10229 / NCIMB 13809 / X14)).